Reading from the N-terminus, the 89-residue chain is Large ribosomal subunit protein eL31 (89 aa).

Belongs to the eukaryotic ribosomal protein eL31 family.

In Picrophilus torridus (strain ATCC 700027 / DSM 9790 / JCM 10055 / NBRC 100828 / KAW 2/3), this protein is Large ribosomal subunit protein eL31.